Reading from the N-terminus, the 170-residue chain is Cyclic pyranopterin monophosphate synthase (170 aa).

Substrate contacts are provided by residues 75 to 77 (MCH) and 115 to 116 (ME). Asp130 is an active-site residue.

Belongs to the MoaC family. In terms of assembly, homohexamer; trimer of dimers.

It carries out the reaction (8S)-3',8-cyclo-7,8-dihydroguanosine 5'-triphosphate = cyclic pyranopterin phosphate + diphosphate. It participates in cofactor biosynthesis; molybdopterin biosynthesis. Catalyzes the conversion of (8S)-3',8-cyclo-7,8-dihydroguanosine 5'-triphosphate to cyclic pyranopterin monophosphate (cPMP). This Bacillus subtilis (strain 168) protein is Cyclic pyranopterin monophosphate synthase.